The sequence spans 152 residues: Lipoprotein signal peptidase (152 aa).

The next 3 helical transmembrane spans lie at 5-25 (LFVL…FWIV), 61-81 (WFFV…LATH), and 84-104 (LNIW…GNFI). Residues D114 and D130 contribute to the active site. A helical transmembrane segment spans residues 125-145 (IFNVADSYLTVGVILLVICLW).

The protein belongs to the peptidase A8 family.

It is found in the cell membrane. The enzyme catalyses Release of signal peptides from bacterial membrane prolipoproteins. Hydrolyzes -Xaa-Yaa-Zaa-|-(S,diacylglyceryl)Cys-, in which Xaa is hydrophobic (preferably Leu), and Yaa (Ala or Ser) and Zaa (Gly or Ala) have small, neutral side chains.. The protein operates within protein modification; lipoprotein biosynthesis (signal peptide cleavage). This protein specifically catalyzes the removal of signal peptides from prolipoproteins. This Streptococcus pyogenes serotype M2 (strain MGAS10270) protein is Lipoprotein signal peptidase.